A 255-amino-acid polypeptide reads, in one-letter code: Putative enoyl-CoA hydratase/isomerase YhaR (255 aa).

2 consecutive transmembrane segments (helical) span residues 96 to 116 and 126 to 146; these read VTIA…ALCA and VLAM…HYLL.

The protein belongs to the enoyl-CoA hydratase/isomerase family.

The protein localises to the cell membrane. This chain is Putative enoyl-CoA hydratase/isomerase YhaR (yhaR), found in Bacillus subtilis (strain 168).